Here is a 399-residue protein sequence, read N- to C-terminus: S-adenosylmethionine synthase (399 aa).

His-17 contributes to the ATP binding site. Residue Asp-19 coordinates Mg(2+). Residue Glu-52 participates in K(+) binding. L-methionine-binding residues include Glu-65 and Gln-109. Residues 109-119 (QSADIAQGVDA) are flexible loop. Residues 177–179 (DSK), 243–244 (KF), Asp-252, 258–259 (RK), Ala-275, and Lys-279 contribute to the ATP site. Asp-252 contacts L-methionine. An L-methionine-binding site is contributed by Lys-283.

The protein belongs to the AdoMet synthase family. Homotetramer; dimer of dimers. The cofactor is Mg(2+). It depends on K(+) as a cofactor.

Its subcellular location is the cytoplasm. The enzyme catalyses L-methionine + ATP + H2O = S-adenosyl-L-methionine + phosphate + diphosphate. The protein operates within amino-acid biosynthesis; S-adenosyl-L-methionine biosynthesis; S-adenosyl-L-methionine from L-methionine: step 1/1. Catalyzes the formation of S-adenosylmethionine (AdoMet) from methionine and ATP. The overall synthetic reaction is composed of two sequential steps, AdoMet formation and the subsequent tripolyphosphate hydrolysis which occurs prior to release of AdoMet from the enzyme. The polypeptide is S-adenosylmethionine synthase (Bradyrhizobium sp. (strain BTAi1 / ATCC BAA-1182)).